A 251-amino-acid polypeptide reads, in one-letter code: MTQVLRSPSEFQAWRRKQSGTVGFVPTMGALHTGHEELIKQARKNNDLVVLSIFVNPTQFNDPKDLEKYPQTWDQDLAMAERNNVDAIFFPRYPDMYPDNYRYKVSENEYSTLLDGAHRPGHFDGVLSVVMKLFNVVRPTKAYFGEKDFQQLTLIQGMVESFFMDLEIVPVPTVREEDGLAKSSRNLRLTPEERKKAPAIFKAITNSKTAAEAAASLSAQGFIVDYVTDVGNRRFVAAKLGEVRLIDNVQI.

ATP is bound at residue Met-28–His-35. The Proton donor role is filled by His-35. Position 59 (Gln-59) interacts with (R)-pantoate. Gln-59 lines the beta-alanine pocket. Gly-145–Asp-148 provides a ligand contact to ATP. A (R)-pantoate-binding site is contributed by Gln-151. Residues Val-174 and Lys-182 to Arg-185 each bind ATP.

This sequence belongs to the pantothenate synthetase family. As to quaternary structure, homodimer.

The protein localises to the cytoplasm. It carries out the reaction (R)-pantoate + beta-alanine + ATP = (R)-pantothenate + AMP + diphosphate + H(+). Its pathway is cofactor biosynthesis; (R)-pantothenate biosynthesis; (R)-pantothenate from (R)-pantoate and beta-alanine: step 1/1. Its function is as follows. Catalyzes the condensation of pantoate with beta-alanine in an ATP-dependent reaction via a pantoyl-adenylate intermediate. In Bdellovibrio bacteriovorus (strain ATCC 15356 / DSM 50701 / NCIMB 9529 / HD100), this protein is Pantothenate synthetase.